The following is a 588-amino-acid chain: 2-succinyl-5-enolpyruvyl-6-hydroxy-3-cyclohexene-1-carboxylate synthase (588 aa).

The protein belongs to the TPP enzyme family. MenD subfamily. As to quaternary structure, homodimer. Mg(2+) is required as a cofactor. The cofactor is Mn(2+). Thiamine diphosphate serves as cofactor.

It catalyses the reaction isochorismate + 2-oxoglutarate + H(+) = 5-enolpyruvoyl-6-hydroxy-2-succinyl-cyclohex-3-ene-1-carboxylate + CO2. It functions in the pathway quinol/quinone metabolism; 1,4-dihydroxy-2-naphthoate biosynthesis; 1,4-dihydroxy-2-naphthoate from chorismate: step 2/7. The protein operates within cofactor biosynthesis; phylloquinone biosynthesis. Catalyzes the thiamine diphosphate-dependent decarboxylation of 2-oxoglutarate and the subsequent addition of the resulting succinic semialdehyde-thiamine pyrophosphate anion to isochorismate to yield 2-succinyl-5-enolpyruvyl-6-hydroxy-3-cyclohexene-1-carboxylate (SEPHCHC). This is 2-succinyl-5-enolpyruvyl-6-hydroxy-3-cyclohexene-1-carboxylate synthase from Prochlorococcus marinus (strain MIT 9515).